The sequence spans 213 residues: Orotate phosphoribosyltransferase (213 aa).

Position 26 (K26) interacts with 5-phospho-alpha-D-ribose 1-diphosphate. 34–35 (FF) lines the orotate pocket. Residues 72-73 (YK), R99, K100, K103, H105, and 124-132 (DDVITAGTA) each bind 5-phospho-alpha-D-ribose 1-diphosphate. Residues T128 and R156 each coordinate orotate.

The protein belongs to the purine/pyrimidine phosphoribosyltransferase family. PyrE subfamily. Homodimer. The cofactor is Mg(2+).

It carries out the reaction orotidine 5'-phosphate + diphosphate = orotate + 5-phospho-alpha-D-ribose 1-diphosphate. It functions in the pathway pyrimidine metabolism; UMP biosynthesis via de novo pathway; UMP from orotate: step 1/2. Catalyzes the transfer of a ribosyl phosphate group from 5-phosphoribose 1-diphosphate to orotate, leading to the formation of orotidine monophosphate (OMP). This Haemophilus influenzae (strain ATCC 51907 / DSM 11121 / KW20 / Rd) protein is Orotate phosphoribosyltransferase.